The following is a 262-amino-acid chain: RNA-binding protein 7 (262 aa).

G2 carries the post-translational modification N-acetylglycine. One can recognise an RRM domain in the interval 10-87 (RTLFVGNLET…RPIKIQFRAG (78 aa)). 2 ZCCHC8 binding regions span residues 25 to 35 (LLFELFHQAGP) and 59 to 76 (HEVS…IKLF). The interval 95–121 (VSLSYPQHHVGNSSPTSTSPSRTVDNM) is disordered. A phosphoserine mark is found at S133 and S134. Residue R149 is modified to Omega-N-methylarginine. Disordered stretches follow at residues 159–212 (SPHL…HYSR) and 242–262 (SHDY…SSRH). Over residues 165 to 194 (SGFSPSAQSHNHTFNQSSSSQWRQDTPSSQ) the composition is skewed to polar residues. A Phosphoserine modification is found at S201. Residues 242 to 253 (SHDYDNRRDSGR) show a composition bias toward basic and acidic residues.

As to quaternary structure, component of the nuclear exosome targeting (NEXT) complex composed of MTREX, ZCCHC8, and RBM7 that directs a subset of non-coding short-lived RNAs for exosomal degradation. Interacts with ZCCHC8 and SF3B2/SAP145. Binds to MTREX through ZCCHC8. Interacts with YWHAE and YWHAZ; these interactions are stress-dependent and RBM7 phosphorylation dependent; release RNA from the NEXT complex and may affect RNA targeting to the nuclear RNA exosomome for degradation. Interacts with MEPCE and LARP7, the core subunits of 7SK snRNP; upon genotoxic stress this interaction is enhanced, triggering the release of inactive P-TEFb complex from the core and P-TEFb complex activation. Post-translationally, phosphorylated at Ser-133 by MAPK14/p38-alpha-activated MAPKAPK2/MK2; this phosphorylation is stress-dependent; this phosphorylation decreases its RNA-binding capacity therefore affecting RNA nuclear exosome-mediated degradation. This phosphorylation mediates YWHAE and YWHAZ interactions.

The protein resides in the nucleus. Its subcellular location is the nucleoplasm. Functionally, RNA-binding subunit of the trimeric nuclear exosome targeting (NEXT) complex, a complex that functions as an RNA exosome cofactor that directs a subset of non-coding short-lived RNAs for exosomal degradation. NEXT is involved in surveillance and turnover of aberrant transcripts and non-coding RNAs. Binds preferentially polyuridine sequences and associates with newly synthesized RNAs, including pre-mRNAs and short-lived exosome substrates such as promoter upstream transcripts (PROMPTs), enhancer RNAs (eRNAs), and 3'-extended products from small nuclear RNAs (snRNAs). Participates in several biological processes including DNA damage response (DDR) and stress response. During stress response, activation of the p38MAPK-MK2 pathway decreases RBM7-RNA-binding and subsequently the RNA exosome degradation activities, thereby modulating the turnover of non-coding transcriptome. Participates in DNA damage response (DDR), through its interaction with MEPCE and LARP7, the core subunits of 7SK snRNP complex, that release the positive transcription elongation factor b (P-TEFb) complex from the 7SK snRNP. In turn, activation of P-TEFb complex induces the transcription of P-TEFb-dependent DDR genes to promote cell viability. The sequence is that of RNA-binding protein 7 from Bos taurus (Bovine).